The chain runs to 127 residues: Group 3 truncated hemoglobin ctb (127 aa).

Heme-binding residues include Tyr-64 and His-72.

This sequence belongs to the truncated hemoglobin family. Group III subfamily. As to quaternary structure, monomer. The cofactor is heme.

It localises to the cytoplasm. Has been suggested to be involved in cytochrome c peroxidase or P450-like oxygen chemistry or cyanide detoxification. The high oxygen affinity of this protein suggests that it probably does not function as an oxygen transporter. The sequence is that of Group 3 truncated hemoglobin ctb (ctb) from Campylobacter jejuni subsp. jejuni serotype O:2 (strain ATCC 700819 / NCTC 11168).